Here is a 155-residue protein sequence, read N- to C-terminus: Large ribosomal subunit protein uL22c (155 aa).

It belongs to the universal ribosomal protein uL22 family. In terms of assembly, part of the 50S ribosomal subunit.

It is found in the plastid. Its subcellular location is the chloroplast. This protein binds specifically to 23S rRNA. In terms of biological role, the globular domain of the protein is located near the polypeptide exit tunnel on the outside of the subunit, while an extended beta-hairpin is found that lines the wall of the exit tunnel in the center of the 70S ribosome. This chain is Large ribosomal subunit protein uL22c (rpl22), found in Solanum bulbocastanum (Wild potato).